The following is a 638-amino-acid chain: Epithelial sodium channel subunit delta (638 aa).

The span at 1 to 13 shows a compositional bias: basic and acidic residues; the sequence is MAEHRSMDGRMEA. The interval 1–47 is disordered; that stretch reads MAEHRSMDGRMEAATRGGSHLQAAAQTPPRPGPPSAPPPPPKEGHQE. Residues 1–86 are Cytoplasmic-facing; sequence MAEHRSMDGR…CSRGNRLKTT (86 aa). Over residues 28–41 the composition is skewed to pro residues; the sequence is PPRPGPPSAPPPPP. The chain crosses the membrane as a helical span at residues 87 to 107; it reads SWGLLSLGALVALCWQLGLLF. Topologically, residues 108–530 are extracellular; the sequence is ERHWHRPVLM…VPQLLSAMGS (423 aa). N-linked (GlcNAc...) asparagine glycans are attached at residues Asn166 and Asn384. Residues 531 to 551 form a helical membrane-spanning segment; the sequence is LCSLWFGASVLSLLELLELLL. Residues 552 to 638 lie on the Cytoplasmic side of the membrane; it reads DASALTLVLG…GPQPLETLDT (87 aa). Residues 574–613 form a disordered region; it reads RASPASGASSIKPEASQMPTPAGGTSDDPEPSGPHLPRVM.

This sequence belongs to the amiloride-sensitive sodium channel (TC 1.A.6) family. SCNN1D subfamily. Can form an alternative heterotrimeric epithelial sodium channel (ENaC), composed of a delta (SCNN1D), beta (SCNN1B), and gamma (SCNN1G) subunit, where the delta (SCNN1D) subunit replaces the alpha (SCNN1A) subunit.

It localises to the apical cell membrane. The enzyme catalyses Na(+)(in) = Na(+)(out). Its activity is regulated as follows. Originally identified and characterized by its inhibition by the diuretic drug amiloride. In terms of biological role, potential alternative pore-forming subunit of the epithelial sodium channel (ENaC), capable of replacing the alpha/SCNN1A subunit, creating a more active channel with distinct properties. ENaC functions in epithelial tissues, where it facilitates the electrodiffusion of sodium ions from the extracellular fluid through the apical membrane of cells, with water following osmotically, regulating sodium balance and fluid homeostasis. This subunit could also function independently as a sodium channel or assemble into other tissue-specific heterotrimeric sodium channels. This chain is Epithelial sodium channel subunit delta, found in Pan troglodytes (Chimpanzee).